A 37-amino-acid chain; its full sequence is MSDIN-like toxin proprotein 5 (37 aa).

A propeptide spanning residues 1 to 10 (MSDINATRLP) is cleaved from the precursor. The segment at residues 11–20 (LFFPPDFRPP) is a cross-link (cyclopeptide (Leu-Pro)). The propeptide occupies 21-37 (CVGDADNFTLTRGENLC).

This sequence belongs to the MSDIN fungal toxin family. Processed by the macrocyclase-peptidase enzyme POPB to yield a toxic cyclic decapeptide. POPB first removes 10 residues from the N-terminus. Conformational trapping of the remaining peptide forces the enzyme to release this intermediate rather than proceed to macrocyclization. The enzyme rebinds the remaining peptide in a different conformation and catalyzes macrocyclization of the N-terminal 10 residues. In terms of tissue distribution, expressed in basidiocarps.

In terms of biological role, probable toxin that belongs to the MSDIN-like toxin family responsible for a large number of food poisoning cases and deaths. The polypeptide is MSDIN-like toxin proprotein 5 (Amanita exitialis (Guangzhou destroying angel)).